We begin with the raw amino-acid sequence, 546 residues long: Chaperonin GroEL (546 aa).

Residues 30 to 33, Lys51, 87 to 91, Gly415, 479 to 481, and Asp495 each bind ATP; these read TLGP, DGTTT, and NAA. A disordered region spans residues 526-546; it reads KKGDSAPAGGGMGDMGGMGMM. The span at 533 to 546 shows a compositional bias: gly residues; it reads AGGGMGDMGGMGMM.

Belongs to the chaperonin (HSP60) family. As to quaternary structure, forms a cylinder of 14 subunits composed of two heptameric rings stacked back-to-back. Interacts with the co-chaperonin GroES.

The protein localises to the cytoplasm. It catalyses the reaction ATP + H2O + a folded polypeptide = ADP + phosphate + an unfolded polypeptide.. Its function is as follows. Together with its co-chaperonin GroES, plays an essential role in assisting protein folding. The GroEL-GroES system forms a nano-cage that allows encapsulation of the non-native substrate proteins and provides a physical environment optimized to promote and accelerate protein folding. This chain is Chaperonin GroEL, found in Thioalkalivibrio sulfidiphilus (strain HL-EbGR7).